Reading from the N-terminus, the 389-residue chain is Endonuclease 8-like 1 (389 aa).

Pro2 serves as the catalytic Schiff-base intermediate with DNA. The active-site Proton donor is the Glu3. Catalysis depends on Lys54, which acts as the Proton donor; for beta-elimination activity. Asn176 is a DNA binding site. The segment at 278-389 (TIWFQGDPGP…PREAGESSAS (112 aa)) is disordered. A compositionally biased stretch (basic residues) spans 322–333 (SRMRRARKHPPK). A compositionally biased stretch (polar residues) spans 336–351 (AQQSEGAGLQQNQETP). The span at 357–373 (GKRRGQRASTGHRRRPK) shows a compositional bias: basic residues. Residues 374 to 389 (TIPDTRPREAGESSAS) are compositionally biased toward basic and acidic residues.

The protein belongs to the FPG family. Detected in heart, spleen and lung.

The protein resides in the cytoplasm. It is found in the cytoskeleton. The protein localises to the microtubule organizing center. Its subcellular location is the centrosome. It localises to the nucleus. The protein resides in the chromosome. The catalysed reaction is 2'-deoxyribonucleotide-(2'-deoxyribose 5'-phosphate)-2'-deoxyribonucleotide-DNA = a 3'-end 2'-deoxyribonucleotide-(2,3-dehydro-2,3-deoxyribose 5'-phosphate)-DNA + a 5'-end 5'-phospho-2'-deoxyribonucleoside-DNA + H(+). Functionally, involved in base excision repair of DNA damaged by oxidation or by mutagenic agents. Acts as a DNA glycosylase that recognizes and removes damaged bases. Has a preference for oxidized pyrimidines, such as thymine glycol, formamidopyrimidine (Fapy) and 5-hydroxyuracil. Has marginal activity towards 8-oxoguanine. Has AP (apurinic/apyrimidinic) lyase activity and introduces nicks in the DNA strand. Cleaves the DNA backbone by beta-delta elimination to generate a single-strand break at the site of the removed base with both 3'- and 5'-phosphates. Has DNA glycosylase/lyase activity towards mismatched uracil and thymine, in particular in U:C and T:C mismatches. Specifically binds 5-hydroxymethylcytosine (5hmC), suggesting that it acts as a specific reader of 5hmC. The polypeptide is Endonuclease 8-like 1 (Neil1) (Mus musculus (Mouse)).